A 182-amino-acid polypeptide reads, in one-letter code: Dynactin subunit 5 (182 aa).

The residue at position 1 (Met-1) is an N-acetylmethionine.

This sequence belongs to the dynactin subunits 5/6 family. Dynactin subunit 5 subfamily. Subunit of dynactin, a multiprotein complex part of a tripartite complex with dynein and a adapter, such as BICDL1, BICD2 or HOOK3. The dynactin complex is built around ACTR1A/ACTB filament and consists of an actin-related filament composed of a shoulder domain, a pointed end and a barbed end. Its length is defined by its flexible shoulder domain. The soulder is composed of 2 DCTN1 subunits, 4 DCTN2 and 2 DCTN3. The 4 DCNT2 (via N-terminus) bind the ACTR1A filament and act as molecular rulers to determine the length. The pointed end is important for binding dynein-dynactin cargo adapters. Consists of 4 subunits: ACTR10, DCNT4, DCTN5 and DCTN6. Within the complex DCTN6 forms a heterodimer with DCTN5. The barbed end is composed of a CAPZA1:CAPZB heterodimers, which binds ACTR1A/ACTB filament and dynactin and stabilizes dynactin. Interacts with N4BP2L1.

The protein resides in the cytoplasm. Its subcellular location is the cytoskeleton. It is found in the chromosome. The protein localises to the centromere. It localises to the kinetochore. In terms of biological role, part of the dynactin complex that activates the molecular motor dynein for ultra-processive transport along microtubules. This Homo sapiens (Human) protein is Dynactin subunit 5.